A 536-amino-acid chain; its full sequence is Phosphoenolpyruvate carboxykinase (ATP) (536 aa).

Substrate contacts are provided by arginine 62, tyrosine 203, and lysine 209. Residues lysine 209, histidine 228, and 244–252 (GLSGTGKTT) each bind ATP. Residues lysine 209 and histidine 228 each coordinate Mn(2+). Aspartate 265 contributes to the Mn(2+) binding site. ATP-binding positions include glutamate 293, arginine 329, 445-446 (RI), and threonine 451. A substrate-binding site is contributed by arginine 329.

The protein belongs to the phosphoenolpyruvate carboxykinase (ATP) family. As to quaternary structure, monomer. Requires Mn(2+) as cofactor.

It is found in the cytoplasm. It carries out the reaction oxaloacetate + ATP = phosphoenolpyruvate + ADP + CO2. Its pathway is carbohydrate biosynthesis; gluconeogenesis. Involved in the gluconeogenesis. Catalyzes the conversion of oxaloacetate (OAA) to phosphoenolpyruvate (PEP) through direct phosphoryl transfer between the nucleoside triphosphate and OAA. In Actinobacillus pleuropneumoniae serotype 7 (strain AP76), this protein is Phosphoenolpyruvate carboxykinase (ATP).